Here is a 282-residue protein sequence, read N- to C-terminus: Shikimate dehydrogenase (NADP(+)) (282 aa).

Residues 19–21 (TQS) and T66 each bind shikimate. The active-site Proton acceptor is K70. The shikimate site is built by N91 and D107. Residues 132 to 136 (GAGGA), 155 to 160 (NRTITR), I224, and G246 each bind NADP(+).

It belongs to the shikimate dehydrogenase family. As to quaternary structure, homodimer.

The enzyme catalyses shikimate + NADP(+) = 3-dehydroshikimate + NADPH + H(+). It participates in metabolic intermediate biosynthesis; chorismate biosynthesis; chorismate from D-erythrose 4-phosphate and phosphoenolpyruvate: step 4/7. Functionally, involved in the biosynthesis of the chorismate, which leads to the biosynthesis of aromatic amino acids. Catalyzes the reversible NADPH linked reduction of 3-dehydroshikimate (DHSA) to yield shikimate (SA). The sequence is that of Shikimate dehydrogenase (NADP(+)) from Buchnera aphidicola subsp. Baizongia pistaciae (strain Bp).